A 340-amino-acid chain; its full sequence is Phosphoribosylformylglycinamidine cyclo-ligase (340 aa).

Belongs to the AIR synthase family.

The protein localises to the cytoplasm. It catalyses the reaction 2-formamido-N(1)-(5-O-phospho-beta-D-ribosyl)acetamidine + ATP = 5-amino-1-(5-phospho-beta-D-ribosyl)imidazole + ADP + phosphate + H(+). Its pathway is purine metabolism; IMP biosynthesis via de novo pathway; 5-amino-1-(5-phospho-D-ribosyl)imidazole from N(2)-formyl-N(1)-(5-phospho-D-ribosyl)glycinamide: step 2/2. This chain is Phosphoribosylformylglycinamidine cyclo-ligase, found in Streptococcus pyogenes serotype M28 (strain MGAS6180).